The following is a 177-amino-acid chain: Large ribosomal subunit protein uL6 (177 aa).

This sequence belongs to the universal ribosomal protein uL6 family. Part of the 50S ribosomal subunit.

Its function is as follows. This protein binds to the 23S rRNA, and is important in its secondary structure. It is located near the subunit interface in the base of the L7/L12 stalk, and near the tRNA binding site of the peptidyltransferase center. The protein is Large ribosomal subunit protein uL6 of Shewanella baltica (strain OS223).